The primary structure comprises 453 residues: GTPase Der (453 aa).

2 EngA-type G domains span residues 3-167 (PIIV…ISEK) and 187-360 (IKVA…EDSK). GTP is bound by residues 9–16 (GRTNVGKS), 57–61 (DTAGL), 119–122 (NKID), 193–200 (GRPNVGKS), 240–244 (DTAGA), and 305–308 (NKCD). One can recognise a KH-like domain in the interval 361 to 445 (RKISTSTLIK…PIQIQFKDNE (85 aa)).

This sequence belongs to the TRAFAC class TrmE-Era-EngA-EngB-Septin-like GTPase superfamily. EngA (Der) GTPase family. In terms of assembly, associates with the 50S ribosomal subunit.

Functionally, GTPase that plays an essential role in the late steps of ribosome biogenesis. The sequence is that of GTPase Der from Buchnera aphidicola subsp. Acyrthosiphon pisum (strain 5A).